Here is a 312-residue protein sequence, read N- to C-terminus: GATA zinc finger domain-containing protein 20 (312 aa).

2 disordered regions span residues 1–45 and 213–232; these read MGKR…PQQP and TIGS…TNTN. Low complexity predominate over residues 29 to 45; the sequence is QQQQQQQEQQPQQPQQP. The segment at 260-287 adopts a GATA-type zinc-finger fold; it reads CYVCGVTETPYWRRGTDEGVMVDLCNAC.

The protein is GATA zinc finger domain-containing protein 20 (gtaT) of Dictyostelium discoideum (Social amoeba).